The chain runs to 438 residues: MYLLPLTLFLTAAFGVSIPRSPLIPGAQIVPASSTADLRAIGAQHHKYPDRETVTIRASRNALDDVSSDFLWGLKQANHGGRLLLKQGETYVIGKKLDLTFLDNIEVQLEGEIQFTNNITYWQANNFYYDFQKSITFWRWGGQDIKIFGSGVLNGNGQKWYDEFAGKQILVYNTFYRPILFLTDNATRISVEGITQLNSPCWTNFFVRTNDVSFDNVYIHAFSTNASSDPANTDGMDSLDVDGVSFTNMRIDVGDDCFSPKPNTTNIFVQNMWCNNTHGVSMGSIGQYAGEMDIIENVYIENVTLLNGQNGARLKAWAGQDVGYGRINNVTYKNIQIQNTDAPIVLDQCYFDINATECAKYPSAVNITNILFENIWGSSSGKDGKIVADLVCSPDAVCTNITLSNVNLTSPKGTAEIVCDDIQGGIGVDCVSDESVTR.

The signal sequence occupies residues 1-15; sequence MYLLPLTLFLTAAFG. Residues N118, N185, and N225 are each glycosylated (N-linked (GlcNAc...) asparagine). Residues 209–248 form a PbH1 1 repeat; that stretch reads TNDVSFDNVYIHAFSTNASSDPANTDGMDSLDVDGVSFTN. Catalysis depends on D255, which acts as the Proton donor. Residues C257 and C274 are joined by a disulfide bond. N-linked (GlcNAc...) asparagine glycosylation is found at N263 and N275. The active site involves H278. PbH1 repeat units lie at residues 295-316 and 327-348; these read IENV…RLKA and INNV…VLDQ. 4 N-linked (GlcNAc...) asparagine glycosylation sites follow: N302, N329, N354, and N366. C392 and C398 are disulfide-bonded. Residues 398 to 430 form a PbH1 4 repeat; the sequence is CTNITLSNVNLTSPKGTAEIVCDDIQGGIGVDC. N-linked (GlcNAc...) asparagine glycosylation is found at N400 and N407.

Belongs to the glycosyl hydrolase 28 family.

It is found in the secreted. The catalysed reaction is [(1-&gt;4)-alpha-D-galacturonosyl](n) + H2O = alpha-D-galacturonate + [(1-&gt;4)-alpha-D-galacturonosyl](n-1). Functionally, specific in hydrolyzing the terminal glycosidic bond of polygalacturonic acid and oligogalacturonates. In Aspergillus niger (strain ATCC MYA-4892 / CBS 513.88 / FGSC A1513), this protein is Probable exopolygalacturonase B (pgxB).